We begin with the raw amino-acid sequence, 481 residues long: Aspartyl/glutamyl-tRNA(Asn/Gln) amidotransferase subunit B (481 aa).

Belongs to the GatB/GatE family. GatB subfamily. As to quaternary structure, heterotrimer of A, B and C subunits.

It catalyses the reaction L-glutamyl-tRNA(Gln) + L-glutamine + ATP + H2O = L-glutaminyl-tRNA(Gln) + L-glutamate + ADP + phosphate + H(+). The catalysed reaction is L-aspartyl-tRNA(Asn) + L-glutamine + ATP + H2O = L-asparaginyl-tRNA(Asn) + L-glutamate + ADP + phosphate + 2 H(+). Its function is as follows. Allows the formation of correctly charged Asn-tRNA(Asn) or Gln-tRNA(Gln) through the transamidation of misacylated Asp-tRNA(Asn) or Glu-tRNA(Gln) in organisms which lack either or both of asparaginyl-tRNA or glutaminyl-tRNA synthetases. The reaction takes place in the presence of glutamine and ATP through an activated phospho-Asp-tRNA(Asn) or phospho-Glu-tRNA(Gln). In Teredinibacter turnerae (strain ATCC 39867 / T7901), this protein is Aspartyl/glutamyl-tRNA(Asn/Gln) amidotransferase subunit B.